The sequence spans 1617 residues: Mediator of RNA polymerase II transcription subunit 12 (1617 aa).

Disordered regions lie at residues 25 to 114 (RADL…PSLS) and 1519 to 1552 (PVSI…QPAF). Polar residues predominate over residues 40–51 (EQPSMPVAQTQG). The segment covering 66–80 (VLEREPPAKRLKIDV) has biased composition (basic and acidic residues). The span at 99-111 (SKSTPGATTSKPP) shows a compositional bias: polar residues. The segment covering 1523–1543 (PSPAASGSTPAPTPSGNSTGG) has biased composition (low complexity).

Belongs to the Mediator complex subunit 12 family. Component of the srb8-11 complex, which itself associates with the Mediator complex.

Its subcellular location is the nucleus. Functionally, component of the srb8-11 complex. The srb8-11 complex is a regulatory module of the Mediator complex which is itself involved in regulation of basal and activated RNA polymerase II-dependent transcription. The srb8-11 complex may be involved in the transcriptional repression of a subset of genes regulated by Mediator. It may inhibit the association of the Mediator complex with RNA polymerase II to form the holoenzyme complex. This chain is Mediator of RNA polymerase II transcription subunit 12 (srb8), found in Aspergillus fumigatus (strain ATCC MYA-4609 / CBS 101355 / FGSC A1100 / Af293) (Neosartorya fumigata).